We begin with the raw amino-acid sequence, 475 residues long: WASH complex subunit 1 (475 aa).

Residues 1–54 are required for WASH complex assembly; it reads MTAVKTQHSLAGQVYAVPLIQPDLRREEAIQQVADALQYLQNISGDIFSRISQR. Positions 1-167 are WHD1; that stretch reads MTAVKTQHSL…EGLGGLPSNI (167 aa). Lys219 participates in a covalent cross-link: Glycyl lysine isopeptide (Lys-Gly) (interchain with G-Cter in ubiquitin). The disordered stretch occupies residues 296–475; the sequence is EDGALLAPPP…GDEDEDDWES (180 aa). A compositionally biased stretch (pro residues) spans 302 to 318; that stretch reads APPPPPPPPPPPPPPAP. Positions 357–475 are VCA; it reads QGAPKEVVDP…GDEDEDDWES (119 aa). Residues 369-391 enclose the WH2 domain; sequence GRATLLESIRQAGGIGKAKLRSV. Basic and acidic residues predominate over residues 390–406; that stretch reads SVKERKLEKKKQKEQEQ. A compositionally biased stretch (gly residues) spans 432-446; it reads SGKGPGTGTSEGPGG. A compositionally biased stretch (acidic residues) spans 466–475; sequence GDEDEDDWES.

Belongs to the WASH1 family. In terms of assembly, component of the WASH core complex also described as WASH regulatory complex SHRC composed of WASHC1, WASHC2, WASHC3, WASHC4 and WASHC5. The WASH core complex associates with the F-actin-capping protein dimer (formed by CAPZA1, CAPZA2 or CAPZA3 and CAPZB) in a transient or substoichiometric manner which was initially described as WASH complex. Interacts (via WHD1 region) with WASHC2; the interaction is direct. Interacts with BECN1; WASHC1 and AMBRA1 can competitively interact with BECN1. Interacts with BLOC1S2; may associate with the BLOC-1 complex. Interacts with tubulin gamma chain (TUBG1 or TUBG2). Interacts with TBC1D23. In terms of processing, ubiquitinated at Lys-219 via 'Lys-63'-linked ubiquitin chains by the TRIM27:MAGEL2 E3 ubiquitin ligase complex, leading to promote endosomal F-actin assembly.

It is found in the early endosome membrane. The protein resides in the recycling endosome membrane. Functionally, acts as a component of the WASH core complex that functions as a nucleation-promoting factor (NPF) at the surface of endosomes, where it recruits and activates the Arp2/3 complex to induce actin polymerization, playing a key role in the fission of tubules that serve as transport intermediates during endosome sorting. Regulates the trafficking of endosomal alpha5beta1 integrin to the plasma membrane and involved in invasive cell migration. In T-cells involved in endosome-to-membrane recycling of receptors including T-cell receptor (TCR), CD28 and ITGAL; proposed to be implicated in T-cell proliferation and effector function. In dendritic cells involved in endosome-to-membrane recycling of major histocompatibility complex (MHC) class II probably involving retromer and subsequently allowing antigen sampling, loading and presentation during T-cell activation. Involved in cytokinesis and following polar body extrusion during oocyte meiotic maturation. Involved in Arp2/3 complex-dependent actin assembly driving Salmonella typhimurium invasion independent of ruffling. Involved in the exocytosis of MMP14 leading to matrix remodeling during invasive migration and implicating late endosome-to-plasma membrane tubular connections and cooperation with the exocyst complex. Involved in negative regulation of autophagy independently from its role in endosomal sorting by inhibiting BECN1 ubiquitination to inactivate PIK3C3/Vps34 activity. This is WASH complex subunit 1 from Rattus norvegicus (Rat).